A 173-amino-acid chain; its full sequence is Skp-like protein (173 aa).

The first 19 residues, 1-19 (MKKFLLLSLMSLASSTVFA), serve as a signal peptide directing secretion.

This sequence belongs to the Skp family.

This Chlamydia muridarum (strain MoPn / Nigg) protein is Skp-like protein.